The primary structure comprises 117 residues: Protein Wnt-6 (117 aa).

Residue serine 1 is the site of O-palmitoleoyl serine; by PORCN attachment. Residues cysteine 83 and cysteine 98 are joined by a disulfide bond. An N-linked (GlcNAc...) asparagine glycan is attached at asparagine 84.

It belongs to the Wnt family. Palmitoleoylation is required for efficient binding to frizzled receptors. Depalmitoleoylation leads to Wnt signaling pathway inhibition.

The protein resides in the secreted. It localises to the extracellular space. Its subcellular location is the extracellular matrix. Ligand for members of the frizzled family of seven transmembrane receptors. Probable developmental protein. May be a signaling molecule which affects the development of discrete regions of tissues. Is likely to signal over only few cell diameters. In Thunnus thynnus (Atlantic bluefin tuna), this protein is Protein Wnt-6 (wnt6).